A 1203-amino-acid polypeptide reads, in one-letter code: DNA-directed RNA polymerase I subunit RPA135 (1203 aa).

Serine 2 carries the post-translational modification N-acetylserine. Serine 81 carries the phosphoserine modification. Residues 1104-1131 (CRECGSILTTQQSVPRIGSISTVCCRRC) form a C4-type zinc finger. Serine 1156 carries the phosphoserine modification.

It belongs to the RNA polymerase beta chain family. Component of the RNA polymerase I (Pol I) complex consisting of 14 subunits: RPA135, RPA190, RPC40, RPA14, RPB5, RPO26, RPA43, RPB8, RPA12, RPB10, RPC19, RPC10, RPA49 and RPA34. The complex is composed of a horseshoe-shaped core containing ten subunits (RPA135, RPA190, RPB5, RPO26, RPB8, RPB10, RPC10, RPA12, RPC19 and RPC40) where RPA135 and RPA190 form the DNA-binding cleft. Outside of the core, RPA14 and RPA43 form the stalk that mediates interactions with transcription initiation factors and newly synthesized RNA.

It localises to the nucleus. Its subcellular location is the nucleolus. The catalysed reaction is RNA(n) + a ribonucleoside 5'-triphosphate = RNA(n+1) + diphosphate. Its function is as follows. DNA-dependent RNA polymerases catalyze the transcription of DNA into RNA using the four ribonucleoside triphosphates as substrates. Component of RNA polymerase I (Pol I) which synthesizes ribosomal RNA precursors. Besides, RNA polymerase I has intrinsic RNA cleavage activity. RPA190 and RPA135 both contribute to the polymerase catalytic activity and together form the Pol I active center. In addition, subunit RPA12 contributes a catalytic zinc ribbon that is required for RNA cleavage by Pol I. A single stranded DNA template strand of the promoter is positioned within the central active site cleft of Pol I. A bridging helix emanates from RPA190 and crosses the cleft near the catalytic site and is thought to promote translocation of Pol I by acting as a ratchet that moves the RNA-DNA hybrid through the active site by switching from straight to bent conformations at each step of nucleotide addition. The chain is DNA-directed RNA polymerase I subunit RPA135 (RPA135) from Saccharomyces cerevisiae (strain ATCC 204508 / S288c) (Baker's yeast).